A 355-amino-acid chain; its full sequence is MTVLKNDRFLRALLKQPVDVTPVWMMRQAGRYLPEYRATRAKAGDFMSLCMNPELACEVTLQPLDRYPQLDAAILFSDILTVPDAMGLGLYFETGEGPRFRKVVSSPADIEALPVPDPERDLGYVMAAVRTIRRELNGRVPLIGFSGSPWTLATYMVEGGSSKDFRKSKAMLYDNPQAMHALLDKLARAVTAYLNGQILAGAQAVQIFDSWGGSLSSAAYQEFSLAYMKRIVDGLIREHEGRRVPVILFTKGGGLWLEAMAGSGAEALGLDWTCDIGDARARVGGKVALQGNMDPSVLYANPAAIRAEVARILARYGAGSGHVFNLGHGITPEVDPAHAGAFFEAVHELSAQYHR.

Substrate contacts are provided by residues 27–31, D78, Y155, S210, and H328; that span reads RQAGR.

Belongs to the uroporphyrinogen decarboxylase family. In terms of assembly, homodimer.

Its subcellular location is the cytoplasm. It carries out the reaction uroporphyrinogen III + 4 H(+) = coproporphyrinogen III + 4 CO2. It participates in porphyrin-containing compound metabolism; protoporphyrin-IX biosynthesis; coproporphyrinogen-III from 5-aminolevulinate: step 4/4. In terms of biological role, catalyzes the decarboxylation of four acetate groups of uroporphyrinogen-III to yield coproporphyrinogen-III. The chain is Uroporphyrinogen decarboxylase from Azotobacter vinelandii (strain DJ / ATCC BAA-1303).